A 460-amino-acid polypeptide reads, in one-letter code: Probable elastin-binding protein EbpS (460 aa).

Positions 1–40 are enriched in basic and acidic residues; that stretch reads MSNNNFKDDFEKNRQSINPDEHQTELKEDDKTNENKKEAD. The disordered stretch occupies residues 1–277; it reads MSNNNFKDDF…NQYNDQSEGK (277 aa). Low complexity predominate over residues 41–57; that stretch reads SQNSLSNNSNQQFPPRN. A compositionally biased stretch (basic and acidic residues) spans 74 to 128; that stretch reads QQDDKHQKNSDAKTTEGSLDDRYDEAQLQQQHDKSQQQNKTEKQSQDNRMKDGKD. Residues 177–192 are compositionally biased toward low complexity; sequence ATGAGIAGAAGVAGAA. Positions 203–226 are enriched in basic and acidic residues; that stretch reads DKQDSKHSNHENDEKSVKNDDQKQ. The span at 264 to 273 shows a compositional bias: low complexity; sequence SNQNNQYNDQ. The chain crosses the membrane as a helical span at residues 285–305; that stretch reads ILLPLIAAILILGAIAIFGGM. Basic and acidic residues predominate over residues 313–359; sequence SKSDDQKIANQSKKDSDKKDGAQSEDNKDKKSDSNKDKKSDSDKNAD. Residues 313–411 are disordered; that stretch reads SKSDDQKIAN…NQQATQGQQS (99 aa). The segment covering 364–411 has biased composition (low complexity); the sequence is NSSSNPNATSTNNNDNVANNNSNYTNQNQQDNANQNSNNQQATQGQQS. The LysM domain occupies 410–458; that stretch reads QSHTVYGQENLYRIAIQYYGEGTQANVDKIKRANGLSSNNIHNGQTLVI.

It localises to the cell membrane. This Staphylococcus epidermidis (strain ATCC 35984 / DSM 28319 / BCRC 17069 / CCUG 31568 / BM 3577 / RP62A) protein is Probable elastin-binding protein EbpS (ebpS).